A 254-amino-acid polypeptide reads, in one-letter code: Major prion protein (254 aa).

The signal sequence occupies residues 1-22 (MANLGYWLLALFVTMWTDVGLC). Positions 23-38 (KKRPKPGGWNTGGSRY) are interaction with ADGRG6. The tract at residues 23–231 (KKRPKPGGWN…QAYYDGRRSS (209 aa)) is interaction with GRB2, ERI3 and SYN1. A disordered region spans residues 25–104 (RPKPGGWNTG…HNQWNKPSKP (80 aa)). Pro44 carries the hydroxyproline modification. 5 consecutive repeat copies span residues 51–58 (PQGGTWGQ), 59–66 (PHGGGWGQ), 67–74 (PHGGSWGQ), 75–82 (PHGGSWGQ), and 83–90 (PHGGGWGQ). Residues 51–90 (PQGGTWGQPHGGGWGQPHGGSWGQPHGGSWGQPHGGGWGQ) form a 5 X 8 AA tandem repeats of P-H-G-G-G-W-G-Q region. Residues 54–94 (GTWGQPHGGGWGQPHGGSWGQPHGGSWGQPHGGGWGQGGGT) show a composition bias toward gly residues. The Cu(2+) site is built by His60, Gly61, Gly62, His68, Gly69, Gly70, His76, Gly77, Gly78, His84, Gly85, and Gly86. A disulfide bridge connects residues Cys178 and Cys213. Residues Asn180 and Asn196 are each glycosylated (N-linked (GlcNAc...) asparagine). Residue Ser230 is the site of GPI-anchor amidated serine attachment. Positions 231 to 254 (SSTVLFSSPPVILLISFLIFLIVG) are cleaved as a propeptide — removed in mature form.

The protein belongs to the prion family. In terms of assembly, monomer and homodimer. Has a tendency to aggregate into amyloid fibrils containing a cross-beta spine, formed by a steric zipper of superposed beta-strands. Soluble oligomers may represent an intermediate stage on the path to fibril formation. Copper binding may promote oligomerization. Interacts with GRB2, APP, ERI3/PRNPIP and SYN1. Mislocalized cytosolically exposed PrP interacts with MGRN1; this interaction alters MGRN1 subcellular location and causes lysosomal enlargement. Interacts with APP. Interacts with KIAA1191. Interacts with ADGRG6. Post-translationally, N-glycosylated. Highly expressed in the brain, lung, kidney and heart. Expressed at low levels in the liver and spleen.

It localises to the cell membrane. It is found in the golgi apparatus. In terms of biological role, its primary physiological function is unclear. May play a role in neuronal development and synaptic plasticity. May be required for neuronal myelin sheath maintenance. May promote myelin homeostasis through acting as an agonist for ADGRG6 receptor. May play a role in iron uptake and iron homeostasis. Soluble oligomers are toxic to cultured neuroblastoma cells and induce apoptosis (in vitro). Association with GPC1 (via its heparan sulfate chains) targets PRNP to lipid rafts. Also provides Cu(2+) or Zn(2+) for the ascorbate-mediated GPC1 deaminase degradation of its heparan sulfate side chains. This chain is Major prion protein (Prnp), found in Mus musculus (Mouse).